The following is a 434-amino-acid chain: MSILKLHAREIFDSRGNPTVEVDLYTNKGLFRAAVPSGASTGIYEALELRDNDKTRFLGKGVSKAVEHVNKTIAPALVNKKVNVVEQEKIDKLMLEMDGTENKSKFGANAILGVSLAVCKAGAAEKGVPLYRHIADLAGNEDVILPVPAFNVINGGSHAGNKLAMQEFMILPVGAENFKEAMRIGAEVYQNLKNVIKEKYGKDATNVGDEGGFAPNILENKEALELLKSAISKAGYTDKIVIGMDVAASEFYRDGKYDLDFKSPDDPSRYITPDQLSDLYKGFIKNYPVVSIEDPFDQHDWAAWKKFTASAGIQVVGDDLTVTNPRRITKAVEEKSCNCLLLKVNQIGSVTESLQACKLAQTNGWGVMVSHRSGETEDTFIADLVVGLCTGQIKTGAPCRSERLAKYNQILRIEEELGSKGRFAGRNFRNPRVN.

Serine 40 contacts Mg(2+). Histidine 158 and glutamate 167 together coordinate substrate. The active-site Proton donor is glutamate 210. Mg(2+) is bound by residues aspartate 245, glutamate 293, and aspartate 318. Substrate is bound by residues glutamate 293 and aspartate 318. Lysine 343 serves as the catalytic Proton acceptor. Substrate-binding positions include 370-373 (SHRS) and lysine 394.

The protein belongs to the enolase family. Homodimer. Mg(2+) is required as a cofactor.

The protein localises to the cytoplasm. The catalysed reaction is (2R)-2-phosphoglycerate = phosphoenolpyruvate + H2O. Its pathway is carbohydrate degradation; glycolysis; pyruvate from D-glyceraldehyde 3-phosphate: step 4/5. This chain is Alpha-enolase, found in Sceloporus undulatus (Eastern fence lizard).